The following is a 545-amino-acid chain: Probable quinate permease (545 aa).

Residues 1–22 are Cytoplasmic-facing; it reads MSILSLVEDRPTPKEVYNWRIY. Residues 23–43 traverse the membrane as a helical segment; the sequence is LLAAVASFTSCMIGYDSAFIG. Topologically, residues 44–66 are extracellular; the sequence is TTISLQSFKDEFNWDAMSTDKQN. The chain crosses the membrane as a helical span at residues 67 to 87; it reads LISANIVSLYQAGAFFGAFFA. At 88–97 the chain is on the cytoplasmic side; sequence YPMGHFWGRR. A helical transmembrane segment spans residues 98–118; the sequence is WGLFVAALVFTLGAGLMLGAN. The Extracellular portion of the chain corresponds to 119–130; the sequence is GDRGLGLIYGGR. The chain crosses the membrane as a helical span at residues 131-151; it reads VLAGLGVGAGSNITPIYISEL. At 152–159 the chain is on the cytoplasmic side; sequence APPAIRGR. The helical transmembrane segment at 160 to 180 threads the bilayer; sequence LVGVYELGWQIGGLVGFWICF. At 181–193 the chain is on the extracellular side; it reads GVDDTLAPSHKQW. The helical transmembrane segment at 194–214 threads the bilayer; it reads IIPFAVQLIPSGLLLLGILFV. The Cytoplasmic segment spans residues 215-285; the sequence is RESPRWLFLR…VWSNKRIMYR (71 aa). The chain crosses the membrane as a helical span at residues 286-306; the sequence is LFLGSMLFLWQNGSGINAINY. At 307 to 325 the chain is on the extracellular side; that stretch reads YSPTVFKSIGLRGANTSLL. A helical transmembrane segment spans residues 326–346; it reads TTGIFGVVKTVVTFVWLLWLI. The Cytoplasmic portion of the chain corresponds to 347-352; that stretch reads DRLGRR. Residues 353–373 form a helical membrane-spanning segment; it reads LLLMIGAAGGSVCLWIVGAYI. Residues 374–384 lie on the Extracellular side of the membrane; the sequence is KVAKPTERDPD. The chain crosses the membrane as a helical span at residues 385-405; it reads APLDGGGIAAMFFFYLWTVFY. Residues 406–457 are Cytoplasmic-facing; it reads TPSWNGTPWVMNSEMFDPNVRSLAQACAAGSNWLWNFLISRFTPQMFAKMEY. The chain crosses the membrane as a helical span at residues 458 to 478; the sequence is GVYFFFASLMILSIVFVFFLI. Residues 479-545 are Extracellular-facing; it reads PETKGIPLES…VEQAESVPKA (67 aa). Residues 520–545 form a disordered region; it reads IEESGYTKSDAQQVERVEQAESVPKA.

Belongs to the major facilitator superfamily. Sugar transporter (TC 2.A.1.1) family. Interacts with creB. Post-translationally, ubiquitinated. Deubiquitinated by creB, probably to control its activity or amount.

The protein localises to the cell membrane. Integral membrane transporter that imports quinic acid to be catabolized as a carbon source. The sequence is that of Probable quinate permease (qutD) from Aspergillus terreus (strain NIH 2624 / FGSC A1156).